The primary structure comprises 322 residues: Large ribosomal subunit protein uL15m (322 aa).

A mitochondrion-targeting transit peptide spans 1–57 (MKAERQTGLRNSFTTVIGRKLINTFVPSMMLTSVAGNDIFFRGLFKSPVLAFQSYRY). Residues 69–99 (GSTKSFKRLGRGPSSGLGKTSGRGQKGQKAR) are disordered. The segment covering 81–93 (PSSGLGKTSGRGQ) has biased composition (gly residues).

Belongs to the universal ribosomal protein uL15 family. Component of the mitochondrial large ribosomal subunit (mt-LSU). Mature yeast 74S mitochondrial ribosomes consist of a small (37S) and a large (54S) subunit. The 37S small subunit contains a 15S ribosomal RNA (15S mt-rRNA) and 34 different proteins. The 54S large subunit contains a 21S rRNA (21S mt-rRNA) and 46 different proteins.

The protein localises to the mitochondrion. Its function is as follows. Component of the mitochondrial ribosome (mitoribosome), a dedicated translation machinery responsible for the synthesis of mitochondrial genome-encoded proteins, including at least some of the essential transmembrane subunits of the mitochondrial respiratory chain. The mitoribosomes are attached to the mitochondrial inner membrane and translation products are cotranslationally integrated into the membrane. The protein is Large ribosomal subunit protein uL15m (MRPL10) of Saccharomyces cerevisiae (strain ATCC 204508 / S288c) (Baker's yeast).